A 519-amino-acid polypeptide reads, in one-letter code: MDTLLSLQAVPAAAAIGGPVVAIGGITLFFIREYVKDQRKKSSSFPPPPKVPGLPVIGNLLQLKEKKPHKTFTKWSEKYGPIYSIRTGANTMIVLNTNDVAKEAMITKYSSISTRKLSKALTILTSDKSIVAMSDYNEFYKAAKRHLLTSTLGPTAQKRHRVHRNLMINNICDQFLAHAKMYPSEAVNFRKIFQSELFGLSMKQAIGEDVESIYVEDLDTTLSRQEMFKILVVDPMEGAIDVDWRDFFPYLKWIPNQHFENKIQQMHFHREAVMKALIEQQKKRIASGKAINCYLDHLLSEAADTLSEQQILMLLWEAIIEASDTTLVTTEWAMYELSKDPKRQNYLLSEIQNACGFDQLNEEKLCRLPYLAAIFQETLRKHSPVPVVPLRYVHEETQLGGYTIPEGSEIAINIYGCNMDKNVWDSPEEWRPERFVFGKDDTTELHKTMAFGGGKRVCAGALQAMTISCIAIGRLVQELEWRLGDGEEANVDTLGLTTHKLHPLQTIIKPRLRDRVCVS.

Over 1–10 (MDTLLSLQAV) the chain is Chloroplast intermembrane. Residues 11 to 31 (PAAAAIGGPVVAIGGITLFFI) traverse the membrane as a helical segment. Residues 32-519 (REYVKDQRKK…PRLRDRVCVS (488 aa)) are Cytoplasmic-facing. A heme-binding site is contributed by Cys-458.

This sequence belongs to the cytochrome P450 family. Heme serves as cofactor.

Its subcellular location is the plastid. The protein resides in the chloroplast outer membrane. It carries out the reaction ent-kaur-16-ene + 3 reduced [NADPH--hemoprotein reductase] + 3 O2 = ent-kaur-16-en-19-oate + 3 oxidized [NADPH--hemoprotein reductase] + 4 H2O + 4 H(+). The protein operates within plant hormone biosynthesis; gibberellin biosynthesis. Functionally, catalyzes three successive oxidations of the 4-methyl group of ent-kaurene giving kaurenoic acid, a key step in gibberellins (GAs) biosynthesis. GAs, which are involved many processes, including stem elongation, play a central role in plant development. The sequence is that of Ent-kaurene oxidase from Salvia miltiorrhiza (Chinese sage).